A 1088-amino-acid polypeptide reads, in one-letter code: RNA-directed RNA polymerase (1088 aa).

The RdRp catalytic domain maps to L501–I687.

It belongs to the reoviridae RNA-directed RNA polymerase family. In terms of assembly, interacts with VP3 (Potential). Interacts with VP2; this interaction activates VP1. Interacts with NSP5; this interaction is probably necessary for the formation of functional virus factories. Interacts with NSP2; this interaction is weak. It depends on Mg(2+) as a cofactor.

It is found in the virion. The enzyme catalyses RNA(n) + a ribonucleoside 5'-triphosphate = RNA(n+1) + diphosphate. Functionally, RNA-directed RNA polymerase that is involved in both transcription and genome replication. Together with VP3 capping enzyme, forms an enzyme complex positioned near the channels situated at each of the five-fold vertices of the core. Following infection, the outermost layer of the virus is lost, leaving a double-layered particle (DLP) made up of the core and VP6 shell. VP1 then catalyzes the transcription of fully conservative plus-strand genomic RNAs that are extruded through the DLP's channels into the cytoplasm where they function as mRNAs for translation of viral proteins. One copy of each of the viral (+)RNAs is also recruited during core assembly, together with newly synthesized polymerase complexes and VP2. The polymerase of these novo-formed particles catalyzes the synthesis of complementary minus-strands leading to dsRNA formation. To do so, the polymerase specifically recognizes and binds 4 bases 5'-UGUG-3' in the conserved 3'-sequence of plus-strand RNA templates. VP2 presumably activates the autoinhibited VP1-RNA complex to coordinate packaging and genome replication. Once dsRNA synthesis is complete, the polymerase switches to the transcriptional mode, thus providing secondary transcription. This is RNA-directed RNA polymerase from Bos taurus (Bovine).